The primary structure comprises 259 residues: Ras-related protein Rab-34 (259 aa).

N-acetylmethionine is present on Met-1. GTP-binding residues include Ser-62, Val-63, Gly-64, Lys-65, Thr-66, Asp-78, Tyr-81, and Thr-84. A Mg(2+)-binding site is contributed by Thr-66. Residues 71-89 carry the Switch 1 motif; the sequence is RFCKDTFDKNYKATIGVDF. Thr-84 and Asp-107 together coordinate Mg(2+). Positions 108–127 match the Switch 2 motif; that stretch reads TAGQERFKCIASTYYRGAQA. Residues Gly-110, Lys-167, Asp-169, and Ser-198 each contribute to the GTP site. The residue at position 241 (Ser-241) is a Phosphoserine. S-geranylgeranyl cysteine attachment occurs at residues Cys-257 and Cys-258.

The protein belongs to the small GTPase superfamily. Rab family. As to quaternary structure, interacts with RILP. The GTP-bound form interacts with REP15. Requires Mg(2+) as cofactor.

It localises to the cytoplasm. It is found in the golgi apparatus. Its subcellular location is the cytoplasmic vesicle. The protein localises to the phagosome. The protein resides in the phagosome membrane. It localises to the cell projection. It is found in the cilium. Its subcellular location is the cytoskeleton. The protein localises to the microtubule organizing center. The protein resides in the centrosome. It localises to the centriole. The catalysed reaction is GTP + H2O = GDP + phosphate + H(+). Regulated by guanine nucleotide exchange factors (GEFs) which promote the exchange of bound GDP for free GTP. Regulated by GTPase activating proteins (GAPs) which increase the GTP hydrolysis activity. Inhibited by GDP dissociation inhibitors (GDIs). Functionally, the small GTPases Rab are key regulators of intracellular membrane trafficking, from the formation of transport vesicles to their fusion with membranes. Rabs cycle between an inactive GDP-bound form and an active GTP-bound form that is able to recruit to membranes different sets of downstream effectors directly responsible for vesicle formation, movement, tethering and fusion. RAB34 transports protein involved in the redistribution of lysosomes to the peri-Golgi region. Plays a role in the maturation of phagosomes that engulf pathogens, such as S.aureus and M.tuberculosis. Plays a role in the fusion of phagosomes with lysosomes. Involved in ciliogenesis. In particular, it is required for early steps of the intracellular cilium assembly pathway initiated by trafficking and docking of ciliary vesicles to the centrioles in the cytoplasm, followed by axoneme formation in the cytoplasm. After axoneme elongation, the centrioles migrate close to the cell surface so that ciliary vesicles can fuse with the plasma membrane to expose cilia to the extracellular space. It seems dispensable for ciliogenesis via the extracellular pathway where cilium assembly begins after migration and docking of the centriole to the plasma membrane. Also acts as a positive regulator of hedgehog signaling and regulates ciliary function. This Rattus norvegicus (Rat) protein is Ras-related protein Rab-34.